The primary structure comprises 70 residues: U2-agatoxin-Ao1q (70 aa).

An N-terminal signal peptide occupies residues 1-20 (MRSIISLLLISAMVFSMIAA). A propeptide spanning residues 21–34 (VPEEEGLQLSEDER) is cleaved from the precursor. 2 disulfide bridges follow: C44/C58 and C52/C68. Leucine amide is present on L69.

The protein belongs to the neurotoxin 01 (U2-agtx) family. In terms of processing, does not contain a cysteine at position 53 which disrupts the cysteine framework. In terms of tissue distribution, expressed by the venom gland.

It is found in the secreted. In terms of biological role, insect active toxin causing rapid but reversible paralysis in crickets. No activity shown in mammals. Does not show effect on mammalian voltage-gated calcium channels. The sequence is that of U2-agatoxin-Ao1q from Agelena orientalis (Funnel-web spider).